We begin with the raw amino-acid sequence, 374 residues long: Small ribosomal subunit protein uS4m (374 aa).

Residues 259–323 form the S4 RNA-binding domain; the sequence is GRLENFLMRL…KKLYFFIKSK (65 aa).

Belongs to the universal ribosomal protein uS4 family.

The protein localises to the mitochondrion. This Acanthamoeba castellanii (Amoeba) protein is Small ribosomal subunit protein uS4m (RPS4).